Reading from the N-terminus, the 284-residue chain is Diaminopimelate epimerase (284 aa).

The substrate site is built by Asn-20, Gln-53, and Asn-73. Cys-82 acts as the Proton donor in catalysis. Substrate-binding positions include 83 to 84 (GN), Asn-167, Asn-200, and 218 to 219 (ER). Cys-227 serves as the catalytic Proton acceptor. 228-229 (GS) serves as a coordination point for substrate.

It belongs to the diaminopimelate epimerase family. Homodimer.

The protein localises to the cytoplasm. The catalysed reaction is (2S,6S)-2,6-diaminopimelate = meso-2,6-diaminopimelate. It functions in the pathway amino-acid biosynthesis; L-lysine biosynthesis via DAP pathway; DL-2,6-diaminopimelate from LL-2,6-diaminopimelate: step 1/1. Its function is as follows. Catalyzes the stereoinversion of LL-2,6-diaminopimelate (L,L-DAP) to meso-diaminopimelate (meso-DAP), a precursor of L-lysine and an essential component of the bacterial peptidoglycan. This is Diaminopimelate epimerase from Xylella fastidiosa (strain M23).